The following is a 678-amino-acid chain: MYIEIASSSSLSLPLLPLTRPHIYTSIPFSTIPEARQRNLIFTVSASSSSESTQNKKVWRKQPEKNTTSSFQALRKHRRYQRSAFLDHNVDMDELLASIHQTQNEKELFSLLSTYKDRQLSIRFMVSLLSRENDWQRSLALLDWVHEEAKYTPSVFAYNVVLRNVLRAKQFDIAHGLFDEMRQRALAPDRYTYSTLITSFGKEGMFDSALSWLQKMEQDRVSGDLVLYSNLIELSRRLCDYSKAISIFSRLKRSGITPDLVAYNSMINVYGKAKLFREARLLIKEMNEAGVLPNTVSYSTLLSVYVENHKFLEALSVFAEMKEVNCALDLTTCNIMIDVYGQLDMVKEADRLFWSLRKMDIEPNVVSYNTILRVYGEAELFGEAIHLFRLMQRKDIEQNVVTYNTMIKIYGKTMEHEKATNLVQEMQSRGIEPNAITYSTIISIWGKAGKLDRAATLFQKLRSSGVEIDQVLYQTMIVAYERVGLMGHAKRLLHELKLPDNIPRETAITILAKAGRTEEATWVFRQAFESGEVKDISVFGCMINLYSRNQRYVNVIEVFEKMRTAGYFPDSNVIAMVLNAYGKQREFEKADTVYREMQEEGCVFPDEVHFQMLSLYSSKKDFEMVESLFQRLESDPNVNSKELHLVVAALYERADKLNDASRVMNRMRERGILKPFPG.

The N-terminal 64 residues, 1–64 (MYIEIASSSS…NKKVWRKQPE (64 aa)), are a transit peptide targeting the chloroplast. 14 PPR repeats span residues 154-188 (SVFAYNVVLRNVLRAKQFDIAHGLFDEMRQRALAP), 189-223 (DRYTYSTLITSFGKEGMFDSALSWLQKMEQDRVSG), 224-258 (DLVLYSNLIELSRRLCDYSKAISIFSRLKRSGITP), 259-293 (DLVAYNSMINVYGKAKLFREARLLIKEMNEAGVLP), 294-328 (NTVSYSTLLSVYVENHKFLEALSVFAEMKEVNCAL), 329-363 (DLTTCNIMIDVYGQLDMVKEADRLFWSLRKMDIEP), 364-398 (NVVSYNTILRVYGEAELFGEAIHLFRLMQRKDIEQ), 399-433 (NVVTYNTMIKIYGKTMEHEKATNLVQEMQSRGIEP), 434-468 (NAITYSTIISIWGKAGKLDRAATLFQKLRSSGVEI), 469-503 (DQVLYQTMIVAYERVGLMGHAKRLLHELKLPDNIP), 535-569 (DISVFGCMINLYSRNQRYVNVIEVFEKMRTAGYFP), 570-604 (DSNVIAMVLNAYGKQREFEKADTVYREMQEEGCVF), 605-638 (PDEVHFQMLSLYSSKKDFEMVESLFQRLESDPNV), and 639-674 (NSKELHLVVAALYERADKLNDASRVMNRMRERGILK).

Belongs to the PPR family. P subfamily.

The protein localises to the plastid. It is found in the chloroplast. This Arabidopsis thaliana (Mouse-ear cress) protein is Pentatricopeptide repeat-containing protein At5g39980, chloroplastic.